Reading from the N-terminus, the 252-residue chain is Small ribosomal subunit protein uS3 (252 aa).

Residues 39-110 (IRKALMKELK…EVKINVVEIK (72 aa)) enclose the KH type-2 domain. Positions 218 to 252 (TSDEKPKFEKRDFNRSNNNRRDQAPKSHPVAKEAK) are disordered. Positions 219–252 (SDEKPKFEKRDFNRSNNNRRDQAPKSHPVAKEAK) are enriched in basic and acidic residues.

It belongs to the universal ribosomal protein uS3 family. In terms of assembly, part of the 30S ribosomal subunit. Forms a tight complex with proteins S10 and S14.

Functionally, binds the lower part of the 30S subunit head. Binds mRNA in the 70S ribosome, positioning it for translation. This is Small ribosomal subunit protein uS3 from Spiroplasma citri.